Here is a 148-residue protein sequence, read N- to C-terminus: MKLTATLQVVVALLICMYNLPECVSQSNDSPPSTNDWMRTLDKSGCKPRDTVVYLGEEYPESTNLQYNPRCVTVKRCSGCCNGDGQICTAVETRNTTVTVSVTGVSSSSGTNSGVSTNLQRISVTEHTKCDCIGRTTTTPTTTREPRR.

A signal peptide spans 1 to 25 (MKLTATLQVVVALLICMYNLPECVS). Intrachain disulfides connect cysteine 46–cysteine 88, cysteine 77–cysteine 130, and cysteine 81–cysteine 132. Asparagine 95 is a glycosylation site (N-linked (GlcNAc...) asparagine; by host).

This sequence belongs to the PDGF/VEGF growth factor family. As to quaternary structure, homodimer; disulfide-linked.

The protein localises to the secreted. Functionally, induces endothelial proliferation. The sequence is that of Vascular endothelial growth factor homolog from Orf virus (strain NZ7) (OV NZ-7).